An 876-amino-acid polypeptide reads, in one-letter code: Leucine--tRNA ligase (876 aa).

The 'HIGH' region signature appears at 43–53 (PYPSGRIHMGH). The 'KMSKS' region signature appears at 630–634 (KMSKS). An ATP-binding site is contributed by lysine 633.

Belongs to the class-I aminoacyl-tRNA synthetase family.

The protein resides in the cytoplasm. It catalyses the reaction tRNA(Leu) + L-leucine + ATP = L-leucyl-tRNA(Leu) + AMP + diphosphate. The sequence is that of Leucine--tRNA ligase from Methylocella silvestris (strain DSM 15510 / CIP 108128 / LMG 27833 / NCIMB 13906 / BL2).